We begin with the raw amino-acid sequence, 1553 residues long: Probable serine/threonine-protein kinase qkgA (1553 aa).

The interval 113–142 (SSSSSSSSTSSSPSLTSSPSSPISTSPPYH) is disordered. LRR repeat units lie at residues 287 to 309 (NGTF…INMC), 311 to 333 (QLVE…TELK), 334 to 356 (FLKN…CNLT), and 357 to 378 (LLKV…IVEL). Positions 395-619 (SCETWNKVKL…KRLIHESEKS (225 aa)) constitute a Roc domain. 3 disordered regions span residues 643–696 (NQGR…QQQQ), 955–1019 (ISNS…PSSQ), and 1048–1090 (NQNG…NNNK). 4 stretches are compositionally biased toward low complexity: residues 648-675 (SISN…TSKK), 683-696 (SQQQ…QQQQ), 956-1018 (SNST…SPSS), and 1059-1090 (TTTT…NNNK). A COR domain is found at 694–893 (QQQLQQSIKE…KTYWKDGVLL (200 aa)). In terms of domain architecture, Protein kinase spans 1242–1546 (ILYERQIGEG…QTSYFDSPFL (305 aa)). Residues 1248–1256 (IGEGGFGLI) and Lys-1271 contribute to the ATP site. Asp-1393 acts as the Proton acceptor in catalysis.

Belongs to the protein kinase superfamily. TKL Ser/Thr protein kinase family. ROCO subfamily.

The enzyme catalyses L-seryl-[protein] + ATP = O-phospho-L-seryl-[protein] + ADP + H(+). It catalyses the reaction L-threonyl-[protein] + ATP = O-phospho-L-threonyl-[protein] + ADP + H(+). Involved in growth, and during development, in aggregation. The sequence is that of Probable serine/threonine-protein kinase qkgA (qkgA-1) from Dictyostelium discoideum (Social amoeba).